Consider the following 331-residue polypeptide: Neurogenic differentiation factor 4 (331 aa).

The interval 1-80 is disordered; it reads MSKTFVKSKE…GPKKKKMTKA (80 aa). The span at 52–64 shows a compositional bias: acidic residues; the sequence is DSIEEEEEEEEDG. Residues 67 to 79 show a composition bias toward basic residues; sequence PKRRGPKKKKMTK. The bHLH domain maps to 87 to 139; the sequence is ARRVKANARERTRMHGLNDALDNLRRVMPCYSKTQKLSKIETLRLARNYIWAL. The disordered stretch occupies residues 246–265; sequence TPPYEGPLTPPLSISGNFSL.

Efficient DNA binding requires dimerization with another bHLH protein. Post-translationally, serine or threonine phosphorylation within the basic region may regulate neurogenic activity.

It localises to the nucleus. Its function is as follows. Probably acts as a transcriptional activator. Mediates neuronal differentiation. Required for the regulation of amacrine cell fate specification in the retina. The polypeptide is Neurogenic differentiation factor 4 (NEUROD4) (Homo sapiens (Human)).